A 1098-amino-acid polypeptide reads, in one-letter code: Bifunctional helicase and thymine dioxygenase JBP2 (1098 aa).

Residues Met-1–Ala-540 are thymine dioxygenase. Positions 415, 417, and 465 each coordinate Fe cation. Arg-479 is a 2-oxoglutarate binding site. Residues Ser-541–Glu-1098 form a DNA Helicase region. Positions Val-555–Gly-730 constitute a Helicase ATP-binding domain. An ATP-binding site is contributed by Met-568 to Thr-575. The DEAH box motif lies at Asp-681–His-684. In terms of domain architecture, Helicase C-terminal spans Val-897–Ala-1057.

The protein in the C-terminal section; belongs to the SNF2/RAD54 helicase family. This sequence in the N-terminal section; belongs to the TET family. JBP2 subfamily. Fe(2+) is required as a cofactor.

It is found in the nucleus. It catalyses the reaction ATP + H2O = ADP + phosphate + H(+). The catalysed reaction is thymine + 2-oxoglutarate + O2 = 5-hydroxymethyluracil + succinate + CO2. In terms of biological role, dioxygenase that catalyzes the first step of DNA base J (beta-d-glucosyl-HOMedU) biosynthesis by converting thymine to 5-hydroxymethyluracil (HOMedU). DNA base J is a hypermodified thymidine residue found in the genome of kinetoplastid parasites, which is localized primarily to repetitive DNA, namely the telomeres, and is implicated in the regulation of antigenic variation. Probably also acts as a DNA helicase. Recognizes and binds specific regions of the genome, hydrolyzes ATP and allows the DNA base J de novo synthesis. Involved in initial synthesis of DNA base J, JBP1 being able to act via the basal level of DNA base J and propagate further synthesis. In contrast to JBP1, it does not specifically bind DNA base J, however it binds chromatin. This chain is Bifunctional helicase and thymine dioxygenase JBP2 (JBP2), found in Leishmania major.